The sequence spans 222 residues: DnaJ homolog subfamily B member 9 (222 aa).

An N-terminal signal peptide occupies residues Met-1–Ala-23. The 65-residue stretch at Ser-26 to Gly-90 folds into the J domain. The interval His-91–Gln-222 is divergent targeting domain. Phosphoserine is present on Ser-133.

In terms of assembly, interacts with HSPA5/BiP; interaction is direct. Interacts with ERN1/IRE1 (via the luminal region). Interacts with DERL1.

It localises to the endoplasmic reticulum lumen. Co-chaperone for Hsp70 protein HSPA5/BiP that acts as a key repressor of the ERN1/IRE1-mediated unfolded protein response (UPR). J domain-containing co-chaperones stimulate the ATPase activity of Hsp70 proteins and are required for efficient substrate recognition by Hsp70 proteins. In the unstressed endoplasmic reticulum, interacts with the luminal region of ERN1/IRE1 and selectively recruits HSPA5/BiP: HSPA5/BiP disrupts the dimerization of the active ERN1/IRE1 luminal region, thereby inactivating ERN1/IRE1. Also involved in endoplasmic reticulum-associated degradation (ERAD) of misfolded proteins. Required for survival of B-cell progenitors and normal antibody production. This is DnaJ homolog subfamily B member 9 from Cricetulus griseus (Chinese hamster).